We begin with the raw amino-acid sequence, 77 residues long: DPYKERIKSDIRQINESQYLKSLAYKYISGEDYTQYLLLNEVLKDDQDYCTCTRRTIYEESMDNTVEFAKKMYELSA.

This is an uncharacterized protein from Plasmodium falciparum (isolate fcm17 / Senegal).